The primary structure comprises 1778 residues: Ankyrin repeat domain-containing protein 36C (1778 aa).

ANK repeat units follow at residues 64 to 93 (KERT…ELNL), 97 to 126 (EDRT…DPNI), 130 to 159 (FGRT…NIEE), 163 to 192 (DEYP…NINA), and 196 to 225 (LGRS…DVFS). 5 disordered regions span residues 260 to 365 (LSIN…DEQK), 501 to 526 (ALPA…VKDS), 538 to 653 (DSLT…QKQS), 671 to 1027 (RITG…QKQL), and 1051 to 1072 (IRGT…EKDS). Polar residues-rich tracts occupy residues 261 to 272 (SINSNPVSSQKQ) and 297 to 306 (KSGTVSSQKQ). The segment covering 539-555 (SLTSSEESSERPPLSTL) has biased composition (low complexity). 2 stretches are compositionally biased toward basic and acidic residues: residues 585-596 (PAEKATSDDKDS) and 619-630 (PAEKATSDEKDS). Polar residues-rich tracts occupy residues 631-653 (VSNI…QKQS) and 679-691 (GTVS…PSKA). The segment covering 794–813 (TSDEKDSFSNITREKKDGEI) has biased composition (basic and acidic residues). Phosphoserine is present on S829. 2 stretches are compositionally biased toward basic and acidic residues: residues 840-849 (RGKEDGEKTR) and 862-881 (TSDE…DGET). Phosphoserine is present on S897. Positions 907 to 917 (AREKKDGEKSR) are enriched in basic and acidic residues. Basic residues predominate over residues 942 to 955 (RGKKHGEKTRRVSS). Composition is skewed to polar residues over residues 983 to 992 (ISGTVSSQKQ) and 1005 to 1026 (VSNI…SQKQ). 4 coiled-coil regions span residues 1157–1187 (EQDL…QIHS), 1247–1333 (ELKD…YRIE), 1362–1480 (SETD…DHDQ), and 1544–1768 (VFEH…ILQH).

The protein belongs to the ANKRD36 family.

The protein is Ankyrin repeat domain-containing protein 36C (ANKRD36C) of Homo sapiens (Human).